The primary structure comprises 261 residues: U11/U12 small nuclear ribonucleoprotein 31 kDa protein (261 aa).

Residues 18-51 (YYRYSSVAAPPPSNPKHQPSSSAKSSAPGGGSGG) form a disordered region. Residues 57 to 135 (STLYVSNLDF…RKLTVSIAAD (79 aa)) enclose the RRM domain. A CCHC-type zinc finger spans residues 153 to 169 (RCYECGDEGHLSYECPK). The tract at residues 165–261 (YECPKNQLGP…YFSDESDDED (97 aa)) is disordered. A compositionally biased stretch (basic and acidic residues) spans 226–235 (AGERLRKREA).

As to quaternary structure, component of the U11/U12 snRNPs that are part of the U12-type spliceosome. Ubiquitous. Abundantly expressed in the shoot apical neristem.

It is found in the nucleus. RNA chaperone required for proper U12 intron splicing and for normal growth and development of plants. Mainly responsible for meristem activity. Plays a role in regulating cell division. This Arabidopsis thaliana (Mouse-ear cress) protein is U11/U12 small nuclear ribonucleoprotein 31 kDa protein (SNRNP31).